We begin with the raw amino-acid sequence, 94 residues long: Putative toxin RelE4 (94 aa).

Belongs to the RelE toxin family.

In terms of biological role, toxic component of a type II toxin-antitoxin (TA) system. Its cognate antitoxin is RelB4 (Potential). The chain is Putative toxin RelE4 (relE4) from Methanocaldococcus jannaschii (strain ATCC 43067 / DSM 2661 / JAL-1 / JCM 10045 / NBRC 100440) (Methanococcus jannaschii).